The chain runs to 174 residues: FMN reductase (NADH) RutF (174 aa).

It belongs to the non-flavoprotein flavin reductase family. RutF subfamily.

It catalyses the reaction FMNH2 + NAD(+) = FMN + NADH + 2 H(+). Its function is as follows. Catalyzes the reduction of FMN to FMNH2 which is used to reduce pyrimidine by RutA via the Rut pathway. In Stutzerimonas stutzeri (strain A1501) (Pseudomonas stutzeri), this protein is FMN reductase (NADH) RutF.